Reading from the N-terminus, the 270-residue chain is Phosphatidate cytidylyltransferase (270 aa).

Transmembrane regions (helical) follow at residues 19 to 39, 53 to 73, 76 to 96, 101 to 121, 126 to 146, 183 to 203, and 248 to 268; these read LWLTWVGGVGFTLFSIAIGLA, TAFSRLFGWAWLIVTGILLIL, GALLTIGFLVAGCAILLVTQW, GWPAAGLFYAGFSALSLSLLR, FGFTTIVFLFAVVWSTDITAY, LVASLVAAPGGWGVPVLALLL, and ALLYLFGAIFAEPDVLSAIFF.

This sequence belongs to the CDS family.

It localises to the cell inner membrane. The enzyme catalyses a 1,2-diacyl-sn-glycero-3-phosphate + CTP + H(+) = a CDP-1,2-diacyl-sn-glycerol + diphosphate. The protein operates within phospholipid metabolism; CDP-diacylglycerol biosynthesis; CDP-diacylglycerol from sn-glycerol 3-phosphate: step 3/3. The polypeptide is Phosphatidate cytidylyltransferase (cdsA) (Brucella abortus (strain 2308)).